The primary structure comprises 24 residues: Sperm protamine P3 (24 aa).

The disordered stretch occupies residues 1 to 24 (RRRRRRRRHRRRRGRRGRRSRGRR).

As to expression, testis.

The protein resides in the nucleus. It is found in the chromosome. In terms of biological role, protamines substitute for histones in the chromatin of sperm during the haploid phase of spermatogenesis. They compact sperm DNA into a highly condensed, stable and inactive complex. This Octopus vulgaris (Common octopus) protein is Sperm protamine P3.